We begin with the raw amino-acid sequence, 303 residues long: Recombination-associated protein RdgC (303 aa).

It belongs to the RdgC family.

The protein localises to the cytoplasm. It is found in the nucleoid. Its function is as follows. May be involved in recombination. This chain is Recombination-associated protein RdgC, found in Enterobacter sp. (strain 638).